We begin with the raw amino-acid sequence, 159 residues long: Thymic stromal lymphopoietin (159 aa).

The signal sequence occupies residues 1 to 28 (MFPFALLYVLSVSFRKIFILQLVGLVLT). 3 disulfides stabilise this stretch: cysteine 34-cysteine 110, cysteine 69-cysteine 75, and cysteine 90-cysteine 137. N-linked (GlcNAc...) asparagine glycosylation is present at asparagine 64. N-linked (GlcNAc...) asparagine glycosylation is present at asparagine 119.

As to quaternary structure, interacts with a receptor composed of CRLF2 and IL7R. Binding of TSLP to CRLF2/TSLPR is a mechanistic prerequisite for recruitment of IL7R to the high-affinity ternary complex. In terms of tissue distribution, isoform 1 is expressed in a number of tissues including heart, liver and prostate. Isoform 2 is the predominant form in keratinocytes of oral mucosa, skin and in salivary glands. It is secreted into saliva.

The protein localises to the secreted. Functionally, cytokine that induces the release of T-cell-attracting chemokines from monocytes and, in particular, enhances the maturation of CD11c(+) dendritic cells. Can induce allergic inflammation by directly activating mast cells. In terms of biological role, may act as an antimicrobial peptide in the oral cavity and on the skin. This Homo sapiens (Human) protein is Thymic stromal lymphopoietin (TSLP).